Here is a 188-residue protein sequence, read N- to C-terminus: Large ribosomal subunit protein eL18 (188 aa).

It belongs to the eukaryotic ribosomal protein eL18 family.

It localises to the cytoplasm. This is Large ribosomal subunit protein eL18 (RpL18) from Drosophila melanogaster (Fruit fly).